Here is a 446-residue protein sequence, read N- to C-terminus: Probable 1,4-beta-D-glucan cellobiohydrolase A (446 aa).

Positions 1–17 (MYQRALLFSALLSVSRA) are cleaved as a signal peptide. An N-linked (GlcNAc...) asparagine glycan is attached at Asn81. The Nucleophile role is filled by Glu226. Glu231 (proton donor) is an active-site residue. 2 N-linked (GlcNAc...) asparagine glycosylation sites follow: Asn284 and Asn333. Residues 399–420 (TDADPSQPGVARGTCEQGAGDP) are disordered.

The protein belongs to the glycosyl hydrolase 7 (cellulase C) family.

It is found in the secreted. The catalysed reaction is Hydrolysis of (1-&gt;4)-beta-D-glucosidic linkages in cellulose and cellotetraose, releasing cellobiose from the non-reducing ends of the chains.. In terms of biological role, the biological conversion of cellulose to glucose generally requires three types of hydrolytic enzymes: (1) Endoglucanases which cut internal beta-1,4-glucosidic bonds; (2) Exocellobiohydrolases that cut the disaccharide cellobiose from the non-reducing end of the cellulose polymer chain; (3) Beta-1,4-glucosidases which hydrolyze the cellobiose and other short cello-oligosaccharides to glucose. In Emericella nidulans (strain FGSC A4 / ATCC 38163 / CBS 112.46 / NRRL 194 / M139) (Aspergillus nidulans), this protein is Probable 1,4-beta-D-glucan cellobiohydrolase A (cbhA).